A 141-amino-acid chain; its full sequence is Small ribosomal subunit protein bS18c (141 aa).

Disordered regions lie at residues 14 to 55 (EFIA…IKPG) and 120 to 141 (IKRRESTARKKRKKGFRKRPKK). The segment covering 24–34 (PKAPLQPPLPP) has biased composition (pro residues). Residues 35-51 (SKRKGKPPKSPRRRSSR) show a composition bias toward basic residues.

The protein belongs to the bacterial ribosomal protein bS18 family. In terms of assembly, part of the 30S ribosomal subunit.

It localises to the plastid. Its subcellular location is the chloroplast. The chain is Small ribosomal subunit protein bS18c from Pelargonium hortorum (Common geranium).